A 257-amino-acid chain; its full sequence is Transmembrane protein C257L (257 aa).

A run of 2 helical transmembrane segments spans residues 123–143 (LELL…FTAL) and 163–183 (IMIF…YVLV).

It belongs to the asfivirus C257R family.

It is found in the host membrane. The protein resides in the virion. In African swine fever virus (isolate Pig/Kenya/KEN-50/1950) (ASFV), this protein is Transmembrane protein C257L.